Reading from the N-terminus, the 155-residue chain is 6,7-dimethyl-8-ribityllumazine synthase (155 aa).

5-amino-6-(D-ribitylamino)uracil is bound by residues Phe18, 49-51, and 75-77; these read ALE and CVI. A (2S)-2-hydroxy-3-oxobutyl phosphate-binding site is contributed by 80–81; the sequence is ET. His83 (proton donor) is an active-site residue. Residue Asn108 participates in 5-amino-6-(D-ribitylamino)uracil binding. A (2S)-2-hydroxy-3-oxobutyl phosphate-binding site is contributed by Arg122.

Belongs to the DMRL synthase family.

It carries out the reaction (2S)-2-hydroxy-3-oxobutyl phosphate + 5-amino-6-(D-ribitylamino)uracil = 6,7-dimethyl-8-(1-D-ribityl)lumazine + phosphate + 2 H2O + H(+). It participates in cofactor biosynthesis; riboflavin biosynthesis; riboflavin from 2-hydroxy-3-oxobutyl phosphate and 5-amino-6-(D-ribitylamino)uracil: step 1/2. In terms of biological role, catalyzes the formation of 6,7-dimethyl-8-ribityllumazine by condensation of 5-amino-6-(D-ribitylamino)uracil with 3,4-dihydroxy-2-butanone 4-phosphate. This is the penultimate step in the biosynthesis of riboflavin. This is 6,7-dimethyl-8-ribityllumazine synthase from Bartonella henselae (strain ATCC 49882 / DSM 28221 / CCUG 30454 / Houston 1) (Rochalimaea henselae).